Consider the following 497-residue polypeptide: uncharacterized protein (497 aa).

Residues D12, T13, and C52 each contribute to the Ca(2+) site. The active-site Nucleophile is the C52. A 3-oxoalanine (Cys) modification is found at C52. H102 is a catalytic residue. Positions 284 and 285 each coordinate Ca(2+).

This sequence belongs to the sulfatase family. Requires Ca(2+) as cofactor. In terms of processing, the conversion to 3-oxoalanine (also known as C-formylglycine, FGly), of a serine or cysteine residue in prokaryotes and of a cysteine residue in eukaryotes, is critical for catalytic activity.

This is an uncharacterized protein from Escherichia coli (strain K12).